The sequence spans 427 residues: Trigger factor (427 aa).

The PPIase FKBP-type domain occupies 163-248; that stretch reads GDTVVIDFVG…IHEVKTKEVP (86 aa).

It belongs to the FKBP-type PPIase family. Tig subfamily.

It localises to the cytoplasm. The enzyme catalyses [protein]-peptidylproline (omega=180) = [protein]-peptidylproline (omega=0). Involved in protein export. Acts as a chaperone by maintaining the newly synthesized protein in an open conformation. Functions as a peptidyl-prolyl cis-trans isomerase. The protein is Trigger factor of Streptococcus agalactiae serotype V (strain ATCC BAA-611 / 2603 V/R).